The chain runs to 600 residues: Threonine dehydratase, mitochondrial (600 aa).

N6-(pyridoxal phosphate)lysine is present on K144. ACT-like domains are found at residues 425-497 (VFLS…DISD) and 519-590 (RLYR…DETN).

Belongs to the serine/threonine dehydratase family. Homotetramer. It depends on pyridoxal 5'-phosphate as a cofactor.

Its subcellular location is the mitochondrion. It is found in the cytoplasm. The catalysed reaction is L-threonine = 2-oxobutanoate + NH4(+). It functions in the pathway amino-acid biosynthesis; L-isoleucine biosynthesis; 2-oxobutanoate from L-threonine: step 1/1. With respect to regulation, isoleucine allosterically inhibits while valine allosterically activates this enzyme. This Schizosaccharomyces pombe (strain 972 / ATCC 24843) (Fission yeast) protein is Threonine dehydratase, mitochondrial.